The chain runs to 315 residues: Beta-ketoacyl-[acyl-carrier-protein] synthase III (315 aa).

Catalysis depends on residues Cys115 and His244. The ACP-binding stretch occupies residues 245-249 (QANAR). Asn274 is a catalytic residue.

This sequence belongs to the thiolase-like superfamily. FabH family. As to quaternary structure, homodimer.

It is found in the cytoplasm. The enzyme catalyses malonyl-[ACP] + acetyl-CoA + H(+) = 3-oxobutanoyl-[ACP] + CO2 + CoA. It participates in lipid metabolism; fatty acid biosynthesis. Functionally, catalyzes the condensation reaction of fatty acid synthesis by the addition to an acyl acceptor of two carbons from malonyl-ACP. Catalyzes the first condensation reaction which initiates fatty acid synthesis and may therefore play a role in governing the total rate of fatty acid production. Possesses both acetoacetyl-ACP synthase and acetyl transacylase activities. Its substrate specificity determines the biosynthesis of branched-chain and/or straight-chain of fatty acids. The polypeptide is Beta-ketoacyl-[acyl-carrier-protein] synthase III (Rubrobacter xylanophilus (strain DSM 9941 / JCM 11954 / NBRC 16129 / PRD-1)).